We begin with the raw amino-acid sequence, 787 residues long: Endonuclease MutS2 (787 aa).

An ATP-binding site is contributed by 331–338 (GPNTGGKT). In terms of domain architecture, Smr spans 711-786 (IDVRGKTSDD…EQGVTIVELR (76 aa)).

Belongs to the DNA mismatch repair MutS family. MutS2 subfamily. Homodimer. Binds to stalled ribosomes, contacting rRNA.

Functionally, endonuclease that is involved in the suppression of homologous recombination and thus may have a key role in the control of bacterial genetic diversity. Acts as a ribosome collision sensor, splitting the ribosome into its 2 subunits. Detects stalled/collided 70S ribosomes which it binds and splits by an ATP-hydrolysis driven conformational change. Acts upstream of the ribosome quality control system (RQC), a ribosome-associated complex that mediates the extraction of incompletely synthesized nascent chains from stalled ribosomes and their subsequent degradation. Probably generates substrates for RQC. The sequence is that of Endonuclease MutS2 from Caldicellulosiruptor saccharolyticus (strain ATCC 43494 / DSM 8903 / Tp8T 6331).